The primary structure comprises 365 residues: Neutral protease 2 homolog mep20 (365 aa).

The signal sequence occupies residues 1-19 (MKVTILASAILALINGALA). A propeptide spanning residues 20 to 172 (LPANTPTLDV…PQAIKLLDRR (153 aa)) is cleaved from the precursor. N-linked (GlcNAc...) asparagine glycosylation occurs at asparagine 73. 2 disulfide bridges follow: cysteine 178–cysteine 249 and cysteine 256–cysteine 274. Histidine 299 contributes to the Zn(2+) binding site. The active site involves glutamate 300. Residues histidine 303 and aspartate 314 each coordinate Zn(2+). Asparagine 351 carries an N-linked (GlcNAc...) asparagine glycan.

It belongs to the peptidase M35 family. The cofactor is Zn(2+).

It localises to the secreted. The catalysed reaction is Preferential cleavage of bonds with hydrophobic residues in P1'. Also 3-Asn-|-Gln-4 and 8-Gly-|-Ser-9 bonds in insulin B chain.. Its function is as follows. Secreted metalloproteinase that allows assimilation of proteinaceous substrates. Shows high activities on basic nuclear substrates such as histone and protamine. May be involved in virulence. The polypeptide is Neutral protease 2 homolog mep20 (mep20) (Aspergillus fumigatus (Neosartorya fumigata)).